The primary structure comprises 606 residues: Membrane protein insertase YidC (606 aa).

The helical transmembrane segment at 8–28 (LILATALSFLVILVWFLLFPP) threads the bilayer. Residues 59 to 78 (TEAAPGAAPQTAATPTENAP) are compositionally biased toward low complexity. Residues 59–79 (TEAAPGAAPQTAATPTENAPR) are disordered. 4 consecutive transmembrane segments (helical) span residues 378–398 (MGVA…PLAW), 448–468 (LPIL…FVTI), 506–526 (SILA…SMWL), and 542–562 (IFAW…SGLI).

It belongs to the OXA1/ALB3/YidC family. Type 1 subfamily. Interacts with the Sec translocase complex via SecD. Specifically interacts with transmembrane segments of nascent integral membrane proteins during membrane integration.

The protein resides in the cell inner membrane. In terms of biological role, required for the insertion and/or proper folding and/or complex formation of integral membrane proteins into the membrane. Involved in integration of membrane proteins that insert both dependently and independently of the Sec translocase complex, as well as at least some lipoproteins. Aids folding of multispanning membrane proteins. In Dinoroseobacter shibae (strain DSM 16493 / NCIMB 14021 / DFL 12), this protein is Membrane protein insertase YidC.